A 362-amino-acid polypeptide reads, in one-letter code: E3 ubiquitin-protein ligase TM129 (362 aa).

Over 1-6 the chain is Lumenal; sequence MDSPEV. The helical transmembrane segment at 7-27 threads the bilayer; that stretch reads TFTLAYLVFAVCFVFTPTEFH. The Cytoplasmic portion of the chain corresponds to 28 to 56; that stretch reads SAGLTVQNLLSGWLGSEDAAFVPYHLRRT. Residues 57 to 77 form a helical membrane-spanning segment; the sequence is AATLLCHSLLPLGYYVGMCFA. Residues 78–94 are Lumenal-facing; that stretch reads ASEKQLYYPSQTPETWR. The helical transmembrane segment at 95–115 threads the bilayer; it reads AFLLLALMLPAIACTLIYYWS. Residues 116–362 are Cytoplasmic-facing; sequence RDHWACHPLA…FCVLDVCAVR (247 aa). The segment at 285 to 350 adopts an RING-type; degenerate zinc-finger fold; the sequence is CIGCMQTQAS…ASRVPCPTCR (66 aa).

The protein belongs to the TMEM129 family. As to quaternary structure, integral component of ER-resident dislocation complexes.

It localises to the endoplasmic reticulum membrane. The catalysed reaction is S-ubiquitinyl-[E2 ubiquitin-conjugating enzyme]-L-cysteine + [acceptor protein]-L-lysine = [E2 ubiquitin-conjugating enzyme]-L-cysteine + N(6)-ubiquitinyl-[acceptor protein]-L-lysine.. The protein operates within protein modification; protein ubiquitination. E3 ubiquitin-protein ligase involved in ER-associated protein degradation, preferentially associates with the E2 enzyme UBE2J2. Exploited by viral US11 proteins to mediate HLA class I proteins degradation. The polypeptide is E3 ubiquitin-protein ligase TM129 (TMEM129) (Bos taurus (Bovine)).